A 425-amino-acid polypeptide reads, in one-letter code: Orexin/Hypocretin receptor type 1 (425 aa).

The tract at residues 1-25 (MEPSATPGPQMGVPTEGRERSPEPP) is disordered. At 1–46 (MEPSATPGPQMGVPTEGRERSPEPPDYEDEFLRYLWRDYLYPKQYE) the chain is on the extracellular side. The tract at residues 26–41 (DYEDEFLRYLWRDYLY) is required for response to orexin-A. The chain crosses the membrane as a helical span at residues 47 to 67 (WVLIAAYVAVFFVALVGNTLV). Residues 68 to 82 (CLAVWRNHHMRTVTN) are Cytoplasmic-facing. The helical transmembrane segment at 83–105 (YFIVNLSLADVLVTAICLPASLL) threads the bilayer. The Extracellular segment spans residues 106-119 (VDITESWLFGHALC). Cysteines 119 and 202 form a disulfide. The helical transmembrane segment at 120–140 (KVIPYLQAVSVSVAVLTLSFI) threads the bilayer. Residues 141–160 (ALDRWYAICHPLLFKSTARR) are Cytoplasmic-facing. The chain crosses the membrane as a helical span at residues 161 to 182 (ARGSILGIWAVSLAVMVPQAAV). Residues 183-213 (MECSSVLPELANRTRLFSVCDERWADDLYPK) are Extracellular-facing. Residue Asn194 is glycosylated (N-linked (GlcNAc...) asparagine). The helical transmembrane segment at 214 to 235 (IYHSCFFIVTYLAPLGLMAMAY) threads the bilayer. The Cytoplasmic portion of the chain corresponds to 236-298 (FQIFRKLWGR…QMRARRKTAK (63 aa)). Residues 299–321 (MLMVVLLVFALCYLPISVLNVLK) form a helical membrane-spanning segment. The Extracellular portion of the chain corresponds to 322–336 (RVFGMFRQASDREAV). A helical membrane pass occupies residues 337–360 (YACFTFSHWLVYANSAANPIIYNF). Residues 361–425 (LSGKFREQFK…LLTSVTTVLP (65 aa)) are Cytoplasmic-facing.

It belongs to the G-protein coupled receptor 1 family.

The protein resides in the cell membrane. Moderately selective excitatory receptor for orexin-A and, with a lower affinity, for orexin-B neuropeptide. Triggers an increase in cytoplasmic Ca(2+) levels in response to orexin-A binding. The protein is Orexin/Hypocretin receptor type 1 of Bos taurus (Bovine).